A 445-amino-acid polypeptide reads, in one-letter code: Glutamate-1-semialdehyde 2,1-aminomutase (445 aa).

Position 263 is an N6-(pyridoxal phosphate)lysine (Lys263).

Belongs to the class-III pyridoxal-phosphate-dependent aminotransferase family. HemL subfamily. The cofactor is pyridoxal 5'-phosphate.

Its subcellular location is the cytoplasm. It catalyses the reaction (S)-4-amino-5-oxopentanoate = 5-aminolevulinate. The protein operates within porphyrin-containing compound metabolism; protoporphyrin-IX biosynthesis; 5-aminolevulinate from L-glutamyl-tRNA(Glu): step 2/2. This Haloarcula marismortui (strain ATCC 43049 / DSM 3752 / JCM 8966 / VKM B-1809) (Halobacterium marismortui) protein is Glutamate-1-semialdehyde 2,1-aminomutase.